Consider the following 174-residue polypeptide: Ribosome maturation factor RimM (174 aa).

Residues 98–171 (EGEFYFHQII…TIHIEVMEGL (74 aa)) form the PRC barrel domain.

Belongs to the RimM family. Binds ribosomal protein uS19.

The protein localises to the cytoplasm. In terms of biological role, an accessory protein needed during the final step in the assembly of 30S ribosomal subunit, possibly for assembly of the head region. Essential for efficient processing of 16S rRNA. May be needed both before and after RbfA during the maturation of 16S rRNA. It has affinity for free ribosomal 30S subunits but not for 70S ribosomes. This is Ribosome maturation factor RimM from Bacillus pumilus (strain SAFR-032).